We begin with the raw amino-acid sequence, 418 residues long: 3-phosphoshikimate 1-carboxyvinyltransferase (418 aa).

3 residues coordinate 3-phosphoshikimate: K26, S27, and R31. Phosphoenolpyruvate is bound at residue K26. Positions 97 and 125 each coordinate phosphoenolpyruvate. 3-phosphoshikimate-binding residues include S170, S171, Q172, D297, N320, and K324. Q172 contacts phosphoenolpyruvate. Catalysis depends on D297, which acts as the Proton acceptor. Residues R328, R375, and K400 each coordinate phosphoenolpyruvate.

This sequence belongs to the EPSP synthase family. Monomer.

It localises to the cytoplasm. The catalysed reaction is 3-phosphoshikimate + phosphoenolpyruvate = 5-O-(1-carboxyvinyl)-3-phosphoshikimate + phosphate. Its pathway is metabolic intermediate biosynthesis; chorismate biosynthesis; chorismate from D-erythrose 4-phosphate and phosphoenolpyruvate: step 6/7. In terms of biological role, catalyzes the transfer of the enolpyruvyl moiety of phosphoenolpyruvate (PEP) to the 5-hydroxyl of shikimate-3-phosphate (S3P) to produce enolpyruvyl shikimate-3-phosphate and inorganic phosphate. The chain is 3-phosphoshikimate 1-carboxyvinyltransferase from Pseudomonas syringae pv. tomato (strain ATCC BAA-871 / DC3000).